The sequence spans 436 residues: Anhydro-N-acetylmuramic acid kinase (436 aa).

32–39 (GTSLDGMD) contributes to the ATP binding site.

It belongs to the anhydro-N-acetylmuramic acid kinase family.

It carries out the reaction 1,6-anhydro-N-acetyl-beta-muramate + ATP + H2O = N-acetyl-D-muramate 6-phosphate + ADP + H(+). Its pathway is amino-sugar metabolism; 1,6-anhydro-N-acetylmuramate degradation. It functions in the pathway cell wall biogenesis; peptidoglycan recycling. Its function is as follows. Catalyzes the specific phosphorylation of 1,6-anhydro-N-acetylmuramic acid (anhMurNAc) with the simultaneous cleavage of the 1,6-anhydro ring, generating MurNAc-6-P. Is required for the utilization of anhMurNAc either imported from the medium or derived from its own cell wall murein, and thus plays a role in cell wall recycling. This chain is Anhydro-N-acetylmuramic acid kinase, found in Psychrobacter arcticus (strain DSM 17307 / VKM B-2377 / 273-4).